The primary structure comprises 158 residues: Na(+)/H(+) antiporter subunit E (158 aa).

The next 2 membrane-spanning stretches (helical) occupy residues 22-41 (YTAV…LFVL) and 54-76 (IWAI…IDVI).

This sequence belongs to the CPA3 antiporters (TC 2.A.63) subunit E family. In terms of assembly, forms a heterooligomeric complex that consists of seven subunits: MrpA, MrpB, MrpC, MrpD, MrpE, MrpF and MrpG.

The protein localises to the cell membrane. In terms of biological role, mnh complex is a Na(+)Li(+)/H(+) antiporter involved in Na(+) and/or Li(+) excretion and Na(+) resistance. Na(+)/H(+) antiport consumes a transmembrane electrical potential, and is thus inferred to be electrogenic. Does not transport K(+), Ca(2+) or Mg(2+). Functionally, mrp complex is a Na(+)/H(+) antiporter involved in Na(+) excretion and Na(+) resistance. This is Na(+)/H(+) antiporter subunit E (mrpE) from Alkalihalophilus pseudofirmus (strain ATCC BAA-2126 / JCM 17055 / OF4) (Bacillus pseudofirmus).